The following is a 216-amino-acid chain: Probable nicotinate-nucleotide adenylyltransferase (216 aa).

The protein belongs to the NadD family.

It carries out the reaction nicotinate beta-D-ribonucleotide + ATP + H(+) = deamido-NAD(+) + diphosphate. The protein operates within cofactor biosynthesis; NAD(+) biosynthesis; deamido-NAD(+) from nicotinate D-ribonucleotide: step 1/1. Its function is as follows. Catalyzes the reversible adenylation of nicotinate mononucleotide (NaMN) to nicotinic acid adenine dinucleotide (NaAD). This chain is Probable nicotinate-nucleotide adenylyltransferase, found in Buchnera aphidicola subsp. Schizaphis graminum (strain Sg).